The sequence spans 697 residues: Pentatricopeptide repeat-containing protein At5g46460, mitochondrial (697 aa).

The N-terminal 36 residues, 1–36, are a transit peptide targeting the mitochondrion; it reads MWSRAIFQRFRFRAFSISHVIHGKCYRSFSVTVEFQ. 14 PPR repeats span residues 39-64, 65-95, 96-130, 131-157, 158-192, 193-223, 224-258, 259-289, 290-324, 325-359, 360-390, 391-425, 426-456, and 463-497; these read EVLI…VPSP, HVSL…MPVR, DVVS…SVVS, WTAM…MPVK, DTAA…NVIS, WTTM…CIKS, TSRP…GFLY, EEYV…KVHE, QVAV…SILP, NQST…GLET, DAFV…IFKK, SIVS…NKEP, DEIT…MSSG, and KIQH…PNEM. The interval 498 to 573 is type E motif; sequence VWLALLSACR…KPGSSWVVIR (76 aa). Residues 574–602 are type E(+) motif; the sequence is GKKHEFFSGDQPHCSRIYEKLEFLREKLK. The segment at 603–697 is type DYW motif; it reads ELGYAPDYRS…NGTCSCGDYW (95 aa).

Belongs to the PPR family. PCMP-H subfamily.

It is found in the mitochondrion. This Arabidopsis thaliana (Mouse-ear cress) protein is Pentatricopeptide repeat-containing protein At5g46460, mitochondrial (PCMP-H49).